The following is a 184-amino-acid chain: Endoribonuclease YbeY (184 aa).

2 stretches are compositionally biased toward acidic residues: residues 1–11 and 19–29; these read MTVEVGADENP and DGAGDESDDED. The interval 1–37 is disordered; sequence MTVEVGADENPDFAHDETDGAGDESDDEDAQGRDPEL. Residues histidine 146, histidine 150, and histidine 156 each coordinate Zn(2+).

This sequence belongs to the endoribonuclease YbeY family. The cofactor is Zn(2+).

The protein localises to the cytoplasm. Functionally, single strand-specific metallo-endoribonuclease involved in late-stage 70S ribosome quality control and in maturation of the 3' terminus of the 16S rRNA. The sequence is that of Endoribonuclease YbeY from Burkholderia mallei (strain ATCC 23344).